Here is a 299-residue protein sequence, read N- to C-terminus: ATP synthase gamma chain (299 aa).

Belongs to the ATPase gamma chain family. As to quaternary structure, F-type ATPases have 2 components, CF(1) - the catalytic core - and CF(0) - the membrane proton channel. CF(1) has five subunits: alpha(3), beta(3), gamma(1), delta(1), epsilon(1). CF(0) has three main subunits: a, b and c.

The protein resides in the cell membrane. Functionally, produces ATP from ADP in the presence of a proton gradient across the membrane. The gamma chain is believed to be important in regulating ATPase activity and the flow of protons through the CF(0) complex. This chain is ATP synthase gamma chain, found in Levilactobacillus brevis (strain ATCC 367 / BCRC 12310 / CIP 105137 / JCM 1170 / LMG 11437 / NCIMB 947 / NCTC 947) (Lactobacillus brevis).